We begin with the raw amino-acid sequence, 428 residues long: Adenosylhomocysteinase (428 aa).

Residues Thr62, Asp134, and Glu159 each coordinate substrate. 160 to 162 (TTT) lines the NAD(+) pocket. The substrate site is built by Lys189 and Asp193. NAD(+) contacts are provided by residues Asn194, 223-228 (GYGWCG), Glu246, Asn281, 302-304 (SGH), and Asn349.

Belongs to the adenosylhomocysteinase family. It depends on NAD(+) as a cofactor.

The protein resides in the cytoplasm. The catalysed reaction is S-adenosyl-L-homocysteine + H2O = L-homocysteine + adenosine. It functions in the pathway amino-acid biosynthesis; L-homocysteine biosynthesis; L-homocysteine from S-adenosyl-L-homocysteine: step 1/1. May play a key role in the regulation of the intracellular concentration of adenosylhomocysteine. The chain is Adenosylhomocysteinase from Gloeobacter violaceus (strain ATCC 29082 / PCC 7421).